The chain runs to 383 residues: Succinyl-diaminopimelate desuccinylase (383 aa).

H73 is a binding site for Zn(2+). The active site involves D75. D107 is a Zn(2+) binding site. Catalysis depends on E141, which acts as the Proton acceptor. Zn(2+) is bound by residues E142, E170, and H356.

Belongs to the peptidase M20A family. DapE subfamily. Homodimer. It depends on Zn(2+) as a cofactor. The cofactor is Co(2+).

The enzyme catalyses N-succinyl-(2S,6S)-2,6-diaminopimelate + H2O = (2S,6S)-2,6-diaminopimelate + succinate. The protein operates within amino-acid biosynthesis; L-lysine biosynthesis via DAP pathway; LL-2,6-diaminopimelate from (S)-tetrahydrodipicolinate (succinylase route): step 3/3. Functionally, catalyzes the hydrolysis of N-succinyl-L,L-diaminopimelic acid (SDAP), forming succinate and LL-2,6-diaminopimelate (DAP), an intermediate involved in the bacterial biosynthesis of lysine and meso-diaminopimelic acid, an essential component of bacterial cell walls. This Pseudomonas fluorescens (strain Pf0-1) protein is Succinyl-diaminopimelate desuccinylase.